A 440-amino-acid polypeptide reads, in one-letter code: O-glycoside alpha-1,2-mannosyltransferase homolog 4 (440 aa).

Over Met1–Phe35 the chain is Cytoplasmic. A helical; Signal-anchor for type II membrane protein transmembrane segment spans residues Val36–Ile56. Residues Tyr57–Glu440 lie on the Lumenal side of the membrane. Residue Glu336 is the Nucleophile of the active site.

This sequence belongs to the glycosyltransferase 15 family.

Its subcellular location is the cytoplasm. The protein resides in the nucleus. The protein localises to the golgi apparatus membrane. In terms of biological role, probable mannosyltransferase involved in O-glycosylation of cell wall and secreted proteins. Transfers an alpha-D-mannosyl residue from GDP-mannose into lipid-linked oligosaccharide, forming an alpha-(1-&gt;2)-D-mannosyl-D-mannose linkage. The sequence is that of O-glycoside alpha-1,2-mannosyltransferase homolog 4 (omh4) from Schizosaccharomyces pombe (strain 972 / ATCC 24843) (Fission yeast).